Reading from the N-terminus, the 210-residue chain is Large ribosomal subunit protein uL3 (210 aa).

This sequence belongs to the universal ribosomal protein uL3 family. In terms of assembly, part of the 50S ribosomal subunit. Forms a cluster with proteins L14 and L19.

Its function is as follows. One of the primary rRNA binding proteins, it binds directly near the 3'-end of the 23S rRNA, where it nucleates assembly of the 50S subunit. The protein is Large ribosomal subunit protein uL3 of Pseudothermotoga lettingae (strain ATCC BAA-301 / DSM 14385 / NBRC 107922 / TMO) (Thermotoga lettingae).